We begin with the raw amino-acid sequence, 72 residues long: Conotoxin VnMKLT2-0221 (72 aa).

The first 22 residues, 1–22 (MKLTCVLIVAVLFLTACQLTTA), serve as a signal peptide directing secretion. The propeptide occupies 23–45 (ASYARSERQHPDLGSSDQNSKLT). Positions 26-45 (ARSERQHPDLGSSDQNSKLT) are disordered. Disulfide bonds link C48–C62, C55–C66, and C61–C71.

The protein belongs to the conotoxin O1 superfamily. Expressed by the venom duct.

The protein resides in the secreted. This is Conotoxin VnMKLT2-0221 from Conus ventricosus (Mediterranean cone).